The primary structure comprises 482 residues: Dual specificity protein phosphatase 10 (482 aa).

The 118-residue stretch at P168 to D285 folds into the Rhodanese domain. The segment at K199–L215 is interaction with MAP kinases. Residues E321–N464 enclose the Tyrosine-protein phosphatase domain. Catalysis depends on C408, which acts as the Phosphocysteine intermediate.

It belongs to the protein-tyrosine phosphatase family. Non-receptor class dual specificity subfamily. Monomer. Interacts with MAPK14. As to expression, expressed in keratinocytes (at protein level). Detected in brain.

The protein localises to the cytoplasm. It localises to the nucleus. The enzyme catalyses O-phospho-L-tyrosyl-[protein] + H2O = L-tyrosyl-[protein] + phosphate. It catalyses the reaction O-phospho-L-seryl-[protein] + H2O = L-seryl-[protein] + phosphate. It carries out the reaction O-phospho-L-threonyl-[protein] + H2O = L-threonyl-[protein] + phosphate. Protein phosphatase involved in the inactivation of MAP kinases. Has a specificity for the MAPK11/MAPK12/MAPK13/MAPK14 subfamily. It preferably dephosphorylates p38. This Homo sapiens (Human) protein is Dual specificity protein phosphatase 10 (DUSP10).